A 217-amino-acid chain; its full sequence is Somatotropin (217 aa).

The first 24 residues, M1–A24, serve as a signal peptide directing secretion. Residue H44 coordinates Zn(2+). C79 and C191 are joined by a disulfide. Phosphoserine is present on S132. Residue E200 coordinates Zn(2+). C208 and C215 are oxidised to a cystine.

This sequence belongs to the somatotropin/prolactin family.

The protein localises to the secreted. Its function is as follows. Plays an important role in growth control. Its major role in stimulating body growth is to stimulate the liver and other tissues to secrete IGF1. It stimulates both the differentiation and proliferation of myoblasts. It also stimulates amino acid uptake and protein synthesis in muscle and other tissues. This chain is Somatotropin (GH1), found in Callithrix jacchus (White-tufted-ear marmoset).